The sequence spans 57 residues: uncharacterized protein (57 aa).

This is an uncharacterized protein from Escherichia coli (strain K12).